We begin with the raw amino-acid sequence, 369 residues long: Superinfection exclusion protein (369 aa).

The first 15 residues, 1 to 15 (MIALLILSLTCSAST), serve as a signal peptide directing secretion.

The protein belongs to the serpin family. Orthopoxvirus OPG040 subfamily. In terms of assembly, interacts with A56 protein.

Its subcellular location is the virion membrane. The protein resides in the host cell membrane. Functionally, prevents cell to cell fusion via its interaction with A56 protein. The A56-K2 complex associates with components of the entry fusion complex (EFC) presumably to avoid superinfection and syncytium formation. The sequence is that of Superinfection exclusion protein (OPG040) from Vaccinia virus (strain Ankara) (VACV).